The sequence spans 373 residues: Aromatic amino acid aminotransferase (373 aa).

K212 is modified (N6-(pyridoxal phosphate)lysine).

This sequence belongs to the class-II pyridoxal-phosphate-dependent aminotransferase family. Homodimer. Pyridoxal 5'-phosphate serves as cofactor.

It catalyses the reaction an aromatic L-alpha-amino acid + 2-oxoglutarate = an aromatic oxo-acid + L-glutamate. In terms of biological role, aminotransferase that catalyzes the conversion of aromatic amino acids and 2-oxoglutarate into corresponding aromatic oxo acids and L-glutamate. The polypeptide is Aromatic amino acid aminotransferase (Corynebacterium jeikeium (strain K411)).